The chain runs to 407 residues: Digeranylgeranylglycerophospholipid reductase (407 aa).

FAD is bound by residues Ala-15, Glu-34, Cys-45, Ala-46, Gly-48, Arg-99, Ala-123, Asp-281, Gly-293, and Ile-294.

The protein belongs to the geranylgeranyl reductase family. DGGGPL reductase subfamily. It depends on FAD as a cofactor.

It catalyses the reaction a 2,3-bis-O-phytanyl-sn-glycerol 1-phospholipid + 8 oxidized 2[4Fe-4S]-[ferredoxin] = a 2,3-bis-O-(geranylgeranyl)-sn-glycerol 1-phospholipid + 8 reduced 2[4Fe-4S]-[ferredoxin] + 16 H(+). The enzyme catalyses 2,3-bis-O-(phytanyl)-sn-glycerol 1-phosphate + 8 oxidized 2[4Fe-4S]-[ferredoxin] = 2,3-bis-O-(geranylgeranyl)-sn-glycerol 1-phosphate + 8 reduced 2[4Fe-4S]-[ferredoxin] + 16 H(+). The catalysed reaction is a 2,3-bis-O-phytanyl-sn-glycerol 1-phospholipid + 8 A = a 2,3-bis-O-(geranylgeranyl)-sn-glycerol 1-phospholipid + 8 AH2. It carries out the reaction CDP-2,3-bis-O-(geranylgeranyl)-sn-glycerol + 8 AH2 = CDP-2,3-bis-O-(phytanyl)-sn-glycerol + 8 A. It catalyses the reaction archaetidylserine + 8 AH2 = 2,3-bis-O-phytanyl-sn-glycero-3-phospho-L-serine + 8 A. It participates in membrane lipid metabolism; glycerophospholipid metabolism. Functionally, is involved in the reduction of 2,3-digeranylgeranylglycerophospholipids (unsaturated archaeols) into 2,3-diphytanylglycerophospholipids (saturated archaeols) in the biosynthesis of archaeal membrane lipids. Catalyzes the formation of archaetidic acid (2,3-di-O-phytanyl-sn-glyceryl phosphate) from 2,3-di-O-geranylgeranylglyceryl phosphate (DGGGP) via the hydrogenation of each double bond of the isoprenoid chains. Requires the adjacently encoded ferredoxin MA_1485 as the electron donor. Is also probably able to reduce double bonds of geranyl groups in CDP-2,3-bis-O-(geranylgeranyl)-sn-glycerol and archaetidylserine, thus acting at various stages in the biosynthesis of archaeal membrane lipids. In Methanosarcina acetivorans (strain ATCC 35395 / DSM 2834 / JCM 12185 / C2A), this protein is Digeranylgeranylglycerophospholipid reductase.